Consider the following 400-residue polypeptide: Elongation factor Tu (400 aa).

The 200-residue stretch at 10-209 (KPHVNIGTIG…NVDAYIPTPE (200 aa)) folds into the tr-type G domain. Residues 19-26 (GHVDHGKT) form a G1 region. 19–26 (GHVDHGKT) contributes to the GTP binding site. Residue T26 participates in Mg(2+) binding. Residues 60 to 64 (GITIN) are G2. Positions 81–84 (DCPG) are G3. Residues 81-85 (DCPGH) and 136-139 (NKSD) each bind GTP. Residues 136-139 (NKSD) form a G4 region. The G5 stretch occupies residues 174-176 (SGL).

The protein belongs to the TRAFAC class translation factor GTPase superfamily. Classic translation factor GTPase family. EF-Tu/EF-1A subfamily. Monomer.

The protein localises to the cytoplasm. The enzyme catalyses GTP + H2O = GDP + phosphate + H(+). In terms of biological role, GTP hydrolase that promotes the GTP-dependent binding of aminoacyl-tRNA to the A-site of ribosomes during protein biosynthesis. This chain is Elongation factor Tu, found in Desulforamulus reducens (strain ATCC BAA-1160 / DSM 100696 / MI-1) (Desulfotomaculum reducens).